An 85-amino-acid chain; its full sequence is MKVTLIAILTCAAVLVLHTTAAEELEAESQLMEVGMPDTELAAVDEERLFKCSVSCEIEKEGNRDCKKKKCKGGWKCKFNMCVKV.

The first 22 residues, 1-22, serve as a signal peptide directing secretion; that stretch reads MKVTLIAILTCAAVLVLHTTAA. Positions 23–48 are excised as a propeptide; it reads EELEAESQLMEVGMPDTELAAVDEER. Disulfide bonds link Cys52–Cys66, Cys56–Cys77, and Cys71–Cys82.

The protein belongs to the neurotoxin 12 (Hwtx-2) family. 02 (Hwtx-2) subfamily. In terms of tissue distribution, expressed by the venom gland.

It localises to the secreted. Postsynaptic neurotoxin. This chain is U4-theraphotoxin-Hhn1r, found in Cyriopagopus hainanus (Chinese bird spider).